The following is a 178-amino-acid chain: Large ribosomal subunit protein uL16 (178 aa).

This sequence belongs to the universal ribosomal protein uL16 family.

The chain is Large ribosomal subunit protein uL16 from Saccharolobus islandicus (strain Y.N.15.51 / Yellowstone #2) (Sulfolobus islandicus).